Consider the following 732-residue polypeptide: MNVERSEFLAGVGHDALWALIEGRHGDPFSILGPHESGGMTIVRVYLPGAEGVDLIEAASGRVVTPFSIAHPSGLFAAAMGSRMHYRLRITWPDGEQITEDPYSFGLLLGELDLHLISEGTHYSLSRTLGAVEMAIDDVAGVRFAVWAPNARRVSVVGDFNAWDGRRNPMRLRQSAGVWELFMPRLAPGERYKFEIIDPHGNCLPQKADPVARASEAAPSTASIVASSTRFRWTDDNWMKGQSRQQRLEGPISVYEVHAGSWLRENGGRSLDWVELSQRLVPYVREMGFTHIELLPIMEHPFGGSWGYQPLGLFAPTGRYGTPEDLAYFIDRCHGAGIGVILDWVPAHFPTDVWGLARFDGTALYEHEDPREGFHRDWNTLIYNLGRNEVKGFLIASALEWLERYHIDGLRVDAVASMLYRDYSRNEGEWIPNRYGGRENLEAVEFFKHLNSIVHERCPHAMMIAEESTAWPGVTKPPEEGGLGFDMKWNMGWMHDSLSYIEKDPVYRSYHHGTMTFGMIYAYSERFILPISHDEVVYGKGSLLGKMPGDEWQKFANLRSYLAFMWGHPGKKLIFMGGEIAQPSEWNHDASIAWDVLDQPAHAGLQRLVKDLNGFYKDEAALQFGDFHSEGFDWAAADDAVNSVLGMLRYAPDRSSSVLVVSNFTPVPRYGYRIGVPQDGVWIEKVTTDAREYGGSGLVNGAVSSESVPAHGRPHSLWLTLPPLATVLLKSP.

Catalysis depends on aspartate 413, which acts as the Nucleophile. The Proton donor role is filled by glutamate 466.

This sequence belongs to the glycosyl hydrolase 13 family. GlgB subfamily. As to quaternary structure, monomer.

It carries out the reaction Transfers a segment of a (1-&gt;4)-alpha-D-glucan chain to a primary hydroxy group in a similar glucan chain.. It participates in glycan biosynthesis; glycogen biosynthesis. In terms of biological role, catalyzes the formation of the alpha-1,6-glucosidic linkages in glycogen by scission of a 1,4-alpha-linked oligosaccharide from growing alpha-1,4-glucan chains and the subsequent attachment of the oligosaccharide to the alpha-1,6 position. This is 1,4-alpha-glucan branching enzyme GlgB 2 from Rhizobium etli (strain ATCC 51251 / DSM 11541 / JCM 21823 / NBRC 15573 / CFN 42).